Here is a 1892-residue protein sequence, read N- to C-terminus: Alpha-2-macroglobulin (1892 aa).

A signal peptide spans 1–23 (MKNIFRKFVFTIFVCLINLQLIA). Residues 1441–1444 (CTEQ) constitute a cross-link (isoglutamyl cysteine thioester (Cys-Gln)).

This sequence belongs to the protease inhibitor I39 (alpha-2-macroglobulin) family. Bacterial alpha-2-macroglobulin subfamily.

Functionally, protects the bacterial cell from host peptidases. The protein is Alpha-2-macroglobulin of Rickettsia conorii (strain ATCC VR-613 / Malish 7).